A 1144-amino-acid chain; its full sequence is PAN2-PAN3 deadenylation complex catalytic subunit PAN2 (1144 aa).

WD repeat units lie at residues 27-66 (KKEKQVTKVVFDTEANLIWAGDSYGRVSSYDPTYSLYTRH), 153-193 (SSTY…VIHS), 196-233 (GHSASITSMDFKDNTLVTAGKSKTFGYLQSDQFINVYD), and 302-341 (HPCKSISQFTLSPSGDYLAFLEEESMINMWNRSNSMSGFT). The interval 344 to 481 (AAVLEYQDYP…LLEYKPSNNI (138 aa)) is linker. The USP domain occupies 482 to 887 (DIPPAYSKLQ…TPEIVVYSDA (406 aa)). Positions 939-1110 (VALDAEFVSL…EDAHTALLLY (172 aa)) constitute an Exonuclease domain. Asp-942, Glu-944, Asp-1051, and Asp-1102 together coordinate a divalent metal cation.

Belongs to the peptidase C19 family. PAN2 subfamily. In terms of assembly, forms a heterotrimer with an asymmetric homodimer of the regulatory subunit PAN3 to form the poly(A)-nuclease (PAN) deadenylation complex. A divalent metal cation serves as cofactor.

It localises to the cytoplasm. The catalysed reaction is Exonucleolytic cleavage of poly(A) to 5'-AMP.. Its activity is regulated as follows. Positively regulated by the regulatory subunit PAN3. In terms of biological role, catalytic subunit of the poly(A)-nuclease (PAN) deadenylation complex, one of two cytoplasmic mRNA deadenylases involved in mRNA turnover. PAN specifically shortens poly(A) tails of RNA and the activity is stimulated by poly(A)-binding protein PAB1. PAN deadenylation is followed by rapid degradation of the shortened mRNA tails by the CCR4-NOT complex. Deadenylated mRNAs are then degraded by two alternative mechanisms, namely exosome-mediated 3'-5' exonucleolytic degradation, or deadenylation-dependent mRNA decaping and subsequent 5'-3' exonucleolytic degradation by XRN1. May also be involved in post-transcriptional maturation of mRNA poly(A) tails. The protein is PAN2-PAN3 deadenylation complex catalytic subunit PAN2 of Kluyveromyces lactis (strain ATCC 8585 / CBS 2359 / DSM 70799 / NBRC 1267 / NRRL Y-1140 / WM37) (Yeast).